The sequence spans 397 residues: Acetate kinase (397 aa).

Residue N8 coordinates Mg(2+). K15 is an ATP binding site. Position 89 (R89) interacts with substrate. Residue D146 is the Proton donor/acceptor of the active site. ATP is bound by residues 206–210, 281–283, and 329–333; these read HLGNG, DLR, and GIGEN. E382 lines the Mg(2+) pocket.

This sequence belongs to the acetokinase family. As to quaternary structure, homodimer. Mg(2+) serves as cofactor. Mn(2+) is required as a cofactor.

Its subcellular location is the cytoplasm. It catalyses the reaction acetate + ATP = acetyl phosphate + ADP. Its pathway is metabolic intermediate biosynthesis; acetyl-CoA biosynthesis; acetyl-CoA from acetate: step 1/2. Its function is as follows. Catalyzes the formation of acetyl phosphate from acetate and ATP. Can also catalyze the reverse reaction. The polypeptide is Acetate kinase (Anoxybacillus flavithermus (strain DSM 21510 / WK1)).